The chain runs to 237 residues: Phosphoribosylaminoimidazole-succinocarboxamide synthase (237 aa).

The protein belongs to the SAICAR synthetase family.

The catalysed reaction is 5-amino-1-(5-phospho-D-ribosyl)imidazole-4-carboxylate + L-aspartate + ATP = (2S)-2-[5-amino-1-(5-phospho-beta-D-ribosyl)imidazole-4-carboxamido]succinate + ADP + phosphate + 2 H(+). It functions in the pathway purine metabolism; IMP biosynthesis via de novo pathway; 5-amino-1-(5-phospho-D-ribosyl)imidazole-4-carboxamide from 5-amino-1-(5-phospho-D-ribosyl)imidazole-4-carboxylate: step 1/2. The polypeptide is Phosphoribosylaminoimidazole-succinocarboxamide synthase (Baumannia cicadellinicola subsp. Homalodisca coagulata).